We begin with the raw amino-acid sequence, 102 residues long: Nuclear protein 2 (102 aa).

2 disordered regions span residues 1-26 and 46-102; these read MDPPTRPSVSGPRTRARPPPPEALPT and PASG…TRLA. The segment covering 85-102 has biased composition (basic residues); it reads QRKRRQRQLQPRPRTRLA.

The protein belongs to the NUPR family.

It is found in the nucleus. Its function is as follows. Acts as a transcriptional repressor by inhibiting gene expression at the NUPR1 promoter in a p53/TP53-dependent manner in cancer cells. Involved in the G1 cell cycle arrest, and in a decrease in cell viability and cell proliferation of pancreatic cancer cells. Plays a role as a negative regulator of the protumoral factor NUPR1. The sequence is that of Nuclear protein 2 from Mus musculus (Mouse).